The sequence spans 366 residues: G kinase-anchoring protein 1 (366 aa).

Residues 1–95 (MASAVLSSVP…SHAVCNAQHD (95 aa)) form an interaction with IRS1 region. Disordered stretches follow at residues 20–110 (QVDS…REEN) and 147–177 (EYED…DRPL). Residues S23, S25, and S27 each carry the phosphoserine modification. Polar residues predominate over residues 39–50 (TGKSQTLGSKST). Residues 47-77 (SKSTTNEKKREKRRKKKEQQQSEANELRNLA) adopt a coiled-coil conformation. S106 carries the phosphoserine; by PKG modification. Coiled-coil stretches lie at residues 128-160 (ADLE…QSKV) and 243-353 (EHNQ…YQGG).

It belongs to the GKAP1 family. As to quaternary structure, interacts with PRKG1 and IRS1.

The protein resides in the golgi apparatus. Functionally, regulates insulin-dependent IRS1 tyrosine phosphorylation in adipocytes by modulating the availability of IRS1 to IR tyrosine kinase. Its association with IRS1 is required for insulin-induced translocation of SLC2A4 to the cell membrane. Involved in TNF-induced impairment of insulin-dependent IRS1 tyrosine phosphorylation. In Homo sapiens (Human), this protein is G kinase-anchoring protein 1 (GKAP1).